The chain runs to 332 residues: Leucine carboxyl methyltransferase 1 (332 aa).

S-adenosyl-L-methionine-binding positions include Arg-71, Gly-96, Asp-120, 169 to 170 (DL), and Glu-196.

The protein belongs to the methyltransferase superfamily. LCMT family.

It carries out the reaction [phosphatase 2A protein]-C-terminal L-leucine + S-adenosyl-L-methionine = [phosphatase 2A protein]-C-terminal L-leucine methyl ester + S-adenosyl-L-homocysteine. Functionally, methylates the carboxyl group of the C-terminal leucine residue of protein phosphatase 2A catalytic subunits to form alpha-leucine ester residues. This chain is Leucine carboxyl methyltransferase 1 (Lcmt1), found in Rattus norvegicus (Rat).